The following is a 266-amino-acid chain: Eukaryotic translation initiation factor 3 subunit J (266 aa).

Disordered stretches follow at residues 1–142 (MAPS…VSDS) and 215–243 (MSNEKMREERAADKGNKKSKAAKTKVSLV). Positions 26–44 (DEEEEDVLDSWDAAEDSEV) are enriched in acidic residues. A coiled-coil region spans residues 40–99 (EDSEVEREKAAKAAEAKAKAEAEAAAKKKSKAQRIQEHKEERKKREEEDSSSESEEDEAE). 2 stretches are compositionally biased toward basic and acidic residues: residues 45–65 (EREKAAKAAEAKAKAEAEAAA) and 73–86 (RIQEHKEERKKREE). Over residues 87–97 (EDSSSESEEDE) the composition is skewed to acidic residues. Basic and acidic residues-rich tracts occupy residues 98–118 (AERRARLRRTEKDSDLKHAED) and 218–230 (EKMREERAADKGN).

This sequence belongs to the eIF-3 subunit J family. As to quaternary structure, component of the eukaryotic translation initiation factor 3 (eIF-3) complex.

Its subcellular location is the cytoplasm. Its function is as follows. Component of the eukaryotic translation initiation factor 3 (eIF-3) complex, which is involved in protein synthesis of a specialized repertoire of mRNAs and, together with other initiation factors, stimulates binding of mRNA and methionyl-tRNAi to the 40S ribosome. The eIF-3 complex specifically targets and initiates translation of a subset of mRNAs involved in cell proliferation. The sequence is that of Eukaryotic translation initiation factor 3 subunit J (hcr1) from Aspergillus terreus (strain NIH 2624 / FGSC A1156).